The primary structure comprises 207 residues: Alpha/beta-tubulin-N-acetyltransferase 9 (207 aa).

Residues 35–180 enclose the N-acetyltransferase domain; it reads EELQRLTASE…QEVTLRLTVS (146 aa).

It belongs to the acetyltransferase family. GNAT subfamily.

It carries out the reaction N-terminal L-methionyl-[tubulin] + acetyl-CoA = N-terminal N(alpha)-acetyl-L-methionyl-[tubulin] + CoA + H(+). N-acetyltransferase that mediates the acetylation of the N-terminal residues of alpha- and beta-tubulin. This is Alpha/beta-tubulin-N-acetyltransferase 9 (NAT9) from Homo sapiens (Human).